The primary structure comprises 320 residues: Ubiquitin-like domain-containing CTD phosphatase 1 (320 aa).

One can recognise a Ubiquitin-like domain in the interval Val6–Val77. In terms of domain architecture, FCP1 homology spans Pro136–Ile296. Asp146, Asp148, and Asp255 together coordinate Mg(2+).

Requires Mg(2+) as cofactor.

Its subcellular location is the nucleus. It catalyses the reaction O-phospho-L-seryl-[protein] + H2O = L-seryl-[protein] + phosphate. The catalysed reaction is O-phospho-L-threonyl-[protein] + H2O = L-threonyl-[protein] + phosphate. Its function is as follows. Dephosphorylates 26S nuclear proteasomes, thereby decreasing their proteolytic activity. Recruited to the 19S regulatory particle of the 26S proteasome where it dephosphorylates 19S component Rpt1 which impairs Rpt1 ATPase activity and disrupts 26S proteasome assembly. The polypeptide is Ubiquitin-like domain-containing CTD phosphatase 1 (Drosophila melanogaster (Fruit fly)).